Reading from the N-terminus, the 192-residue chain is uncharacterized protein (192 aa).

A signal peptide spans 1–24 (MSGVLSCVLRACACAGLCCWVCMG). The tract at residues 140 to 192 (RAGADEGAGGNAAGCPEDTRGFARSPGDLMGGMNGDLGDEGETGEGGDNGAGE) is disordered.

This is an uncharacterized protein from Human herpesvirus 6A (strain Uganda-1102) (HHV-6 variant A).